The chain runs to 162 residues: Selenoprotein F (162 aa).

A signal peptide spans 1–28; that stretch reads MAAGQGGWLRPALGLRLLLATAFQAVSA. Position 93 (U93) is a non-standard amino acid, selenocysteine.

The protein belongs to the selenoprotein M/F family. In terms of assembly, forms a tight complex with UGGT1/UGCGL1. Interacts with UGGT2/UGCGL2. Interacts with RDH11. As to expression, highest levels in prostate, lower levels in brain, lung, thyroid gland, and large intestine.

The protein resides in the endoplasmic reticulum lumen. Functionally, may be involved in redox reactions associated with the formation of disulfide bonds. May contribute to the quality control of protein folding in the endoplasmic reticulum. May regulate protein folding by enhancing the catalytic activity of UGGT1/UGCGL1 and UGGT2/UGCGL2. This Rattus norvegicus (Rat) protein is Selenoprotein F.